The chain runs to 246 residues: Probable transcriptional regulatory protein COSY_0365 (246 aa).

It belongs to the TACO1 family.

The protein resides in the cytoplasm. This is Probable transcriptional regulatory protein COSY_0365 from Vesicomyosocius okutanii subsp. Calyptogena okutanii (strain HA).